A 1330-amino-acid polypeptide reads, in one-letter code: Ubinuclein-2 (1330 aa).

The segment at 1–113 is disordered; it reads MAEPRRVAFI…PPPRPPKETV (113 aa). S13 is modified (phosphoserine). 2 stretches are compositionally biased toward basic and acidic residues: residues 16–31 and 55–67; these read RRRE…EPPR and ARDK…EVSR. The span at 81-96 shows a compositional bias: pro residues; the sequence is PEPPPPPLPLQTPPPR. Residue T229 is modified to Phosphothreonine. S236 bears the Phosphoserine mark. Disordered stretches follow at residues 236 to 304 and 322 to 345; these read SDTE…KKRY and DALK…PKPP. Phosphothreonine is present on T238. K258 is covalently cross-linked (Glycyl lysine isopeptide (Lys-Gly) (interchain with G-Cter in SUMO2)). S297 is subject to Phosphoserine. S402, S405, S408, and S570 each carry phosphoserine. Disordered stretches follow at residues 559–583, 767–789, 801–835, 866–909, 964–991, 1021–1202, and 1292–1330; these read LQAD…KRVI, NKGP…GLRE, LATP…DLAH, GLQR…SLTQ, YRLP…APST, PKLA…SSVV, and PGTQ…RKPQ. The span at 560–570 shows a compositional bias: basic and acidic residues; the sequence is QADEEREKNGS. 2 stretches are compositionally biased toward polar residues: residues 767 to 780 and 809 to 818; these read NKGP…NVPT and SPQTAHSSSL. Residues 866–895 are compositionally biased toward low complexity; that stretch reads GLQRSSQIHASSSQTHVSSSQAQAAASSHA. Polar residues-rich tracts occupy residues 899–909 and 969–980; these read SEAQDASSLTQ and STPSPGNGSQGS. Residues 1030–1044 show a composition bias toward pro residues; the sequence is ATSPKPLTSPKPSVS. Residues 1045 to 1056 show a composition bias toward low complexity; that stretch reads PKPSLSAKPSVS. The residue at position 1052 (K1052) is an N6-acetyllysine. Polar residues-rich tracts occupy residues 1073–1148, 1158–1169, and 1308–1317; these read PSSS…NSLS, RGSNLNSSGANR, and HLQQAFNDGG. S1107 is modified (phosphoserine). K1132 bears the N6-acetyllysine mark. The span at 1321–1330 shows a compositional bias: basic and acidic residues; that stretch reads GDTKLPRKPQ.

Belongs to the ubinuclein family.

The chain is Ubinuclein-2 (Ubn2) from Rattus norvegicus (Rat).